The sequence spans 121 residues: UPF0102 protein BVU_1879 (121 aa).

The protein belongs to the UPF0102 family.

This chain is UPF0102 protein BVU_1879, found in Phocaeicola vulgatus (strain ATCC 8482 / DSM 1447 / JCM 5826 / CCUG 4940 / NBRC 14291 / NCTC 11154) (Bacteroides vulgatus).